Here is a 378-residue protein sequence, read N- to C-terminus: Alkanesulfonate monooxygenase (378 aa).

It belongs to the SsuD family.

The catalysed reaction is an alkanesulfonate + FMNH2 + O2 = an aldehyde + FMN + sulfite + H2O + 2 H(+). In terms of biological role, catalyzes the desulfonation of aliphatic sulfonates. The chain is Alkanesulfonate monooxygenase from Bacillus velezensis (strain DSM 23117 / BGSC 10A6 / LMG 26770 / FZB42) (Bacillus amyloliquefaciens subsp. plantarum).